The chain runs to 288 residues: Acetyl-coenzyme A carboxylase carboxyl transferase subunit beta (288 aa).

The CoA carboxyltransferase N-terminal domain maps to L34–Q288. Zn(2+)-binding residues include C38, C41, C56, and C59. The C4-type zinc finger occupies C38–C59.

Belongs to the AccD/PCCB family. Acetyl-CoA carboxylase is a heterohexamer composed of biotin carboxyl carrier protein (AccB), biotin carboxylase (AccC) and two subunits each of ACCase subunit alpha (AccA) and ACCase subunit beta (AccD). Requires Zn(2+) as cofactor.

It is found in the cytoplasm. The catalysed reaction is N(6)-carboxybiotinyl-L-lysyl-[protein] + acetyl-CoA = N(6)-biotinyl-L-lysyl-[protein] + malonyl-CoA. The protein operates within lipid metabolism; malonyl-CoA biosynthesis; malonyl-CoA from acetyl-CoA: step 1/1. Component of the acetyl coenzyme A carboxylase (ACC) complex. Biotin carboxylase (BC) catalyzes the carboxylation of biotin on its carrier protein (BCCP) and then the CO(2) group is transferred by the transcarboxylase to acetyl-CoA to form malonyl-CoA. The sequence is that of Acetyl-coenzyme A carboxylase carboxyl transferase subunit beta from Streptococcus thermophilus (strain CNRZ 1066).